Consider the following 406-residue polypeptide: Cysteine desulfurase (406 aa).

An N6-(pyridoxal phosphate)lysine modification is found at Lys-226. The Cysteine persulfide intermediate role is filled by Cys-364.

Belongs to the class-V pyridoxal-phosphate-dependent aminotransferase family. Csd subfamily. In terms of assembly, homodimer. Interacts with SufE and the SufBCD complex composed of SufB, SufC and SufD. The interaction with SufE is required to mediate the direct transfer of the sulfur atom from the S-sulfanylcysteine. It depends on pyridoxal 5'-phosphate as a cofactor.

It is found in the cytoplasm. The catalysed reaction is (sulfur carrier)-H + L-cysteine = (sulfur carrier)-SH + L-alanine. It carries out the reaction L-selenocysteine + AH2 = hydrogenselenide + L-alanine + A + H(+). It functions in the pathway cofactor biosynthesis; iron-sulfur cluster biosynthesis. Cysteine desulfurases mobilize the sulfur from L-cysteine to yield L-alanine, an essential step in sulfur metabolism for biosynthesis of a variety of sulfur-containing biomolecules. Component of the suf operon, which is activated and required under specific conditions such as oxidative stress and iron limitation. Acts as a potent selenocysteine lyase in vitro, that mobilizes selenium from L-selenocysteine. Selenocysteine lyase activity is however unsure in vivo. This Escherichia coli O127:H6 (strain E2348/69 / EPEC) protein is Cysteine desulfurase.